The following is a 320-amino-acid chain: ATP-dependent 6-phosphofructokinase (320 aa).

ATP-binding positions include Gly12, 73-74, and 103-106; these read RF and GDGS. Asp104 contributes to the Mg(2+) binding site. 126–128 lines the substrate pocket; the sequence is TID. Asp128 serves as the catalytic Proton acceptor. Position 155 (Arg155) interacts with ADP. Residues Arg163 and 170–172 contribute to the substrate site; that span reads MGR. ADP-binding positions include 186–188 and Lys212; that span reads GCE. Substrate is bound by residues Glu223, Arg244, and 250–253; that span reads HIQR.

The protein belongs to the phosphofructokinase type A (PFKA) family. ATP-dependent PFK group I subfamily. Prokaryotic clade 'B1' sub-subfamily. As to quaternary structure, homotetramer. Mg(2+) serves as cofactor.

The protein resides in the cytoplasm. It carries out the reaction beta-D-fructose 6-phosphate + ATP = beta-D-fructose 1,6-bisphosphate + ADP + H(+). It functions in the pathway carbohydrate degradation; glycolysis; D-glyceraldehyde 3-phosphate and glycerone phosphate from D-glucose: step 3/4. Allosterically activated by ADP and other diphosphonucleosides, and allosterically inhibited by phosphoenolpyruvate. Functionally, catalyzes the phosphorylation of D-fructose 6-phosphate to fructose 1,6-bisphosphate by ATP, the first committing step of glycolysis. This is ATP-dependent 6-phosphofructokinase from Buchnera aphidicola subsp. Cinara cedri (strain Cc).